A 279-amino-acid chain; its full sequence is Acyl-[acyl-carrier-protein]--UDP-N-acetylglucosamine O-acyltransferase (279 aa).

Belongs to the transferase hexapeptide repeat family. LpxA subfamily. In terms of assembly, homotrimer.

Its subcellular location is the cytoplasm. The catalysed reaction is a (3R)-hydroxyacyl-[ACP] + UDP-N-acetyl-alpha-D-glucosamine = a UDP-3-O-[(3R)-3-hydroxyacyl]-N-acetyl-alpha-D-glucosamine + holo-[ACP]. It participates in glycolipid biosynthesis; lipid IV(A) biosynthesis; lipid IV(A) from (3R)-3-hydroxytetradecanoyl-[acyl-carrier-protein] and UDP-N-acetyl-alpha-D-glucosamine: step 1/6. In terms of biological role, involved in the biosynthesis of lipid A, a phosphorylated glycolipid that anchors the lipopolysaccharide to the outer membrane of the cell. The chain is Acyl-[acyl-carrier-protein]--UDP-N-acetylglucosamine O-acyltransferase from Chlamydia pneumoniae (Chlamydophila pneumoniae).